Here is a 44-residue protein sequence, read N- to C-terminus: Cytochrome b559 subunit beta (44 aa).

A helical membrane pass occupies residues 19–35 (WLAVHTLAVPTVFFIGA). His23 contributes to the heme binding site.

This sequence belongs to the PsbE/PsbF family. As to quaternary structure, heterodimer of an alpha subunit and a beta subunit. PSII is composed of 1 copy each of membrane proteins PsbA, PsbB, PsbC, PsbD, PsbE, PsbF, PsbH, PsbI, PsbJ, PsbK, PsbL, PsbM, PsbT, PsbX, PsbY, PsbZ, Psb30/Ycf12, peripheral proteins PsbO, CyanoQ (PsbQ), PsbU, PsbV and a large number of cofactors. It forms dimeric complexes. Heme b is required as a cofactor.

The protein resides in the cellular thylakoid membrane. In terms of biological role, this b-type cytochrome is tightly associated with the reaction center of photosystem II (PSII). PSII is a light-driven water:plastoquinone oxidoreductase that uses light energy to abstract electrons from H(2)O, generating O(2) and a proton gradient subsequently used for ATP formation. It consists of a core antenna complex that captures photons, and an electron transfer chain that converts photonic excitation into a charge separation. This Gloeothece citriformis (strain PCC 7424) (Cyanothece sp. (strain PCC 7424)) protein is Cytochrome b559 subunit beta.